The chain runs to 190 residues: UPF0200 protein OE_4442F (190 aa).

8 to 15 (GMPGSGKS) provides a ligand contact to ATP. The disordered stretch occupies residues 120 to 144 (ARIEDRDRPGDTDGEPLDAREDRER).

The protein belongs to the UPF0200 family.

The protein is UPF0200 protein OE_4442F of Halobacterium salinarum (strain ATCC 29341 / DSM 671 / R1).